The sequence spans 481 residues: Aspartyl/glutamyl-tRNA(Asn/Gln) amidotransferase subunit B (481 aa).

Belongs to the GatB/GatE family. GatB subfamily. In terms of assembly, heterotrimer of A, B and C subunits.

It catalyses the reaction L-glutamyl-tRNA(Gln) + L-glutamine + ATP + H2O = L-glutaminyl-tRNA(Gln) + L-glutamate + ADP + phosphate + H(+). The enzyme catalyses L-aspartyl-tRNA(Asn) + L-glutamine + ATP + H2O = L-asparaginyl-tRNA(Asn) + L-glutamate + ADP + phosphate + 2 H(+). In terms of biological role, allows the formation of correctly charged Asn-tRNA(Asn) or Gln-tRNA(Gln) through the transamidation of misacylated Asp-tRNA(Asn) or Glu-tRNA(Gln) in organisms which lack either or both of asparaginyl-tRNA or glutaminyl-tRNA synthetases. The reaction takes place in the presence of glutamine and ATP through an activated phospho-Asp-tRNA(Asn) or phospho-Glu-tRNA(Gln). The protein is Aspartyl/glutamyl-tRNA(Asn/Gln) amidotransferase subunit B of Pseudomonas paraeruginosa (strain DSM 24068 / PA7) (Pseudomonas aeruginosa (strain PA7)).